The sequence spans 73 residues: TKCYVTPDVKSETCPAGQDLCYTETWCVAWCTVRGKRVSLTCAAICPIVPPKVSIKCCSTDACGPFPTWPNVR.

Disulfide bonds link Cys3–Cys21, Cys14–Cys42, Cys27–Cys31, Cys46–Cys57, and Cys58–Cys63.

It belongs to the three-finger toxin family. Long-chain subfamily. Type II alpha-neurotoxin sub-subfamily. As to expression, expressed by the venom gland.

The protein localises to the secreted. Functionally, binds with high affinity to muscular (alpha-1/CHRNA1) and neuronal (alpha-7/CHRNA7) nicotinic acetylcholine receptor (nAChR) and inhibits acetylcholine from binding to the receptor, thereby impairing neuromuscular and neuronal transmission. This is Long neurotoxin 3 from Ophiophagus hannah (King cobra).